A 268-amino-acid chain; its full sequence is Protein c-ets-1-B (268 aa).

Residues 131–139 are helix HI-1; that stretch reads FKDYVRDRA. A helix HI-2 region spans residues 150–157; it reads AAALAGYT. The segment at residues 162–242 is a DNA-binding region (ETS); it reads IQLWQFLLEL…AGKRYVYRFV (81 aa). Positions 245–249 are helix H4; sequence LQSLL. A helix H5 region spans residues 253-259; the sequence is PEELHAM.

This sequence belongs to the ETS family. In terms of assembly, binds DNA as a homodimer; homodimerization is required for transcription activation.

Its subcellular location is the nucleus. The protein resides in the cytoplasm. With respect to regulation, autoinhibited by a module composed of four alpha helices (HI-1, HI-2, H4, and H5) that flank the DNA-binding ETS domain, reducing the affinity for DNA. In terms of biological role, transcription factor. Directly controls the expression of cytokine and chemokine genes in a wide variety of different cellular contexts. This chain is Protein c-ets-1-B (ets1-b), found in Xenopus laevis (African clawed frog).